A 386-amino-acid chain; its full sequence is Patatin-T5 (386 aa).

The signal sequence occupies residues 1 to 23 (MATTNSFTILIFMILATTSSTFA). The PNPLA domain maps to 32-229 (LSIDGGGIKG…TVDDPALLSI (198 aa)). The GXGXXG signature appears at 36 to 41 (GGGIKG). Residue N60 is glycosylated (N-linked (GlcNAc...) asparagine). A GXSXG motif is present at residues 75–79 (GTSTG). S77 serves as the catalytic Nucleophile. Residues N90 and N202 are each glycosylated (N-linked (GlcNAc...) asparagine). D215 (proton acceptor) is an active-site residue. The DGA/G motif lies at 215–217 (DGA).

Belongs to the patatin family. N-glycosylated. As to expression, tuber and stolon.

It localises to the vacuole. Probable lipolytic acyl hydrolase (LAH), an activity which is thought to be involved in the response of tubers to pathogens. The protein is Patatin-T5 of Solanum tuberosum (Potato).